A 299-amino-acid polypeptide reads, in one-letter code: Probable plastid-lipid-associated protein 13, chloroplastic (299 aa).

A chloroplast-targeting transit peptide spans 1-48; that stretch reads MALIHGSVPGTSAVRLVFSTSASPSRFCLNVPVVKQGWKNSCRRRVLR. N-acetylvaline is present on alanine 2.

Belongs to the PAP/fibrillin family.

The protein resides in the plastid. It localises to the chloroplast. It is found in the plastoglobule. The chain is Probable plastid-lipid-associated protein 13, chloroplastic (PAP13) from Arabidopsis thaliana (Mouse-ear cress).